Here is a 308-residue protein sequence, read N- to C-terminus: Transaldolase (308 aa).

Lysine 125 acts as the Schiff-base intermediate with substrate in catalysis.

Belongs to the transaldolase family. Type 1 subfamily. Homodimer.

Its subcellular location is the cytoplasm. It carries out the reaction D-sedoheptulose 7-phosphate + D-glyceraldehyde 3-phosphate = D-erythrose 4-phosphate + beta-D-fructose 6-phosphate. It functions in the pathway carbohydrate degradation; pentose phosphate pathway; D-glyceraldehyde 3-phosphate and beta-D-fructose 6-phosphate from D-ribose 5-phosphate and D-xylulose 5-phosphate (non-oxidative stage): step 2/3. Transaldolase is important for the balance of metabolites in the pentose-phosphate pathway. This is Transaldolase from Pseudomonas putida (strain ATCC 47054 / DSM 6125 / CFBP 8728 / NCIMB 11950 / KT2440).